We begin with the raw amino-acid sequence, 259 residues long: 1-(5-phosphoribosyl)-5-[(5-phosphoribosylamino)methylideneamino] imidazole-4-carboxamide isomerase (259 aa).

Residue Asp8 is the Proton acceptor of the active site. The active-site Proton donor is Asp129.

The protein belongs to the HisA/HisF family.

It is found in the cytoplasm. The enzyme catalyses 1-(5-phospho-beta-D-ribosyl)-5-[(5-phospho-beta-D-ribosylamino)methylideneamino]imidazole-4-carboxamide = 5-[(5-phospho-1-deoxy-D-ribulos-1-ylimino)methylamino]-1-(5-phospho-beta-D-ribosyl)imidazole-4-carboxamide. It functions in the pathway amino-acid biosynthesis; L-histidine biosynthesis; L-histidine from 5-phospho-alpha-D-ribose 1-diphosphate: step 4/9. This Pelotomaculum thermopropionicum (strain DSM 13744 / JCM 10971 / SI) protein is 1-(5-phosphoribosyl)-5-[(5-phosphoribosylamino)methylideneamino] imidazole-4-carboxamide isomerase.